The sequence spans 427 residues: Trigger factor (427 aa).

Residues 163 to 248 form the PPIase FKBP-type domain; the sequence is GDVVNLDFDG…INEVKSKEVP (86 aa).

The protein belongs to the FKBP-type PPIase family. Tig subfamily.

The protein localises to the cytoplasm. The enzyme catalyses [protein]-peptidylproline (omega=180) = [protein]-peptidylproline (omega=0). Involved in protein export. Acts as a chaperone by maintaining the newly synthesized protein in an open conformation. Functions as a peptidyl-prolyl cis-trans isomerase. The protein is Trigger factor of Macrococcus caseolyticus (strain JCSC5402) (Macrococcoides caseolyticum).